The chain runs to 571 residues: Kelch-like protein 28 (571 aa).

The BTB domain occupies 35 to 102 (CDIILRVGDV…AYTGTVFISQ (68 aa)). Kelch repeat units follow at residues 284 to 331 (VLCA…VLDQ), 332 to 386 (KVYV…VLAG), 387 to 433 (ELYA…VLDG), 435 to 479 (IYAI…VMLG), 480 to 526 (FIFV…VIDN), and 528 to 570 (LYVV…GLTA).

In Homo sapiens (Human), this protein is Kelch-like protein 28 (KLHL28).